The following is a 336-amino-acid chain: Atypical chemokine receptor 1 (336 aa).

The Extracellular segment spans residues 1 to 63; that stretch reads MGNCLHQAEL…CNLLDDSSLP (63 aa). Residues N16, N27, and N33 are each glycosylated (N-linked (GlcNAc...) asparagine). Cystine bridges form between C51–C276 and C129–C195. The helical transmembrane segment at 64 to 84 threads the bilayer; the sequence is FFILASVLGILASSTVLFLLF. At 85-95 the chain is on the cytoplasmic side; that stretch reads RPLFRWQLCPG. The helical transmembrane segment at 96–116 threads the bilayer; that stretch reads WPVLAQLAVGSTLFSIVVPIL. Over 117–129 the chain is Extracellular; sequence APGLGNTRSSAPC. The helical transmembrane segment at 130 to 153 threads the bilayer; sequence SLGYCVWYGSAFAQALLLGCHASL. The Cytoplasmic portion of the chain corresponds to 154–166; sequence GPKLGAGQVPGLT. Residues 167–187 form a helical membrane-spanning segment; the sequence is LGLSVGLWGAAALLTLPITLA. Over 188 to 207 the chain is Extracellular; that stretch reads SDASDGLCTPIYSTELKALQ. A helical membrane pass occupies residues 208–228; it reads ATHTVACFAIFVLLPLGLFGA. Over 229–244 the chain is Cytoplasmic; sequence KGLKKVLGMGPGPWMN. The helical transmembrane segment at 245 to 265 threads the bilayer; it reads ILWVWFIFWWPHGVVLGLDFL. Topologically, residues 266-287 are extracellular; the sequence is VRSKLLLLPTCLAQQVLDLLLN. Residues 288 to 308 form a helical membrane-spanning segment; that stretch reads LAEALAIVHCVATPLLLALFC. At 309–336 the chain is on the cytoplasmic side; the sequence is HQATRTLVPSLPLPERWSSPVDTLGSKS.

This sequence belongs to the G-protein coupled receptor 1 family. Atypical chemokine receptor subfamily.

It localises to the early endosome. It is found in the recycling endosome. The protein resides in the membrane. In terms of biological role, atypical chemokine receptor that controls chemokine levels and localization via high-affinity chemokine binding that is uncoupled from classic ligand-driven signal transduction cascades, resulting instead in chemokine sequestration, degradation, or transcytosis. Also known as interceptor (internalizing receptor) or chemokine-scavenging receptor or chemokine decoy receptor. Has a promiscuous chemokine-binding profile, interacting with inflammatory chemokines of both the CXC and the CC subfamilies but not with homeostatic chemokines. Acts as a receptor for chemokines including CCL2, CCL5, CCL7, CCL11, CCL13, CCL14, CCL17, CXCL5, CXCL6, IL8/CXCL8, CXCL11, GRO, RANTES, MCP-1 and TARC. May regulate chemokine bioavailability and, consequently, leukocyte recruitment through two distinct mechanisms: when expressed in endothelial cells, it sustains the abluminal to luminal transcytosis of tissue-derived chemokines and their subsequent presentation to circulating leukocytes; when expressed in erythrocytes, serves as blood reservoir of cognate chemokines but also as a chemokine sink, buffering potential surges in plasma chemokine levels. This is Atypical chemokine receptor 1 (ACKR1) from Saguinus imperator (Emperor tamarin).